The sequence spans 142 residues: Large ribosomal subunit protein uL11 (142 aa).

The protein belongs to the universal ribosomal protein uL11 family. Part of the ribosomal stalk of the 50S ribosomal subunit. Interacts with L10 and the large rRNA to form the base of the stalk. L10 forms an elongated spine to which L12 dimers bind in a sequential fashion forming a multimeric L10(L12)X complex. Post-translationally, one or more lysine residues are methylated.

Its function is as follows. Forms part of the ribosomal stalk which helps the ribosome interact with GTP-bound translation factors. The chain is Large ribosomal subunit protein uL11 from Acidithiobacillus ferrooxidans (strain ATCC 23270 / DSM 14882 / CIP 104768 / NCIMB 8455) (Ferrobacillus ferrooxidans (strain ATCC 23270)).